Reading from the N-terminus, the 38-residue chain is Large ribosomal subunit protein bL36 (38 aa).

Belongs to the bacterial ribosomal protein bL36 family.

The polypeptide is Large ribosomal subunit protein bL36 (Wigglesworthia glossinidia brevipalpis).